A 253-amino-acid polypeptide reads, in one-letter code: MECPIIALSVGFSNNSQPYVEAIIKAGGCPIVIYPGLQRNSIPPNIDGIILAGGESVHPNRYGEDFDPNAPKSVDVIRDSTEWGMIDFALKKKIPILGICRGCQVLNVYFGGSLYQNVSSCGFRDIHRPSKPRHYLAHKVMAKPGKLKNILGSNVIDVNSIHDQGIKTLGMGLQSTVISDDGLCEGIESKDGLIIGVQWHPEAIIDKQPHSLKLFQYFINRSKWHMKQSNIFSNVPHESSFYRNSIISIPIAP.

Positions 5-228 constitute a Glutamine amidotransferase type-1 domain; sequence IIALSVGFSN…INRSKWHMKQ (224 aa). Cys100 (nucleophile) is an active-site residue. Catalysis depends on residues His200 and Glu202.

The protein resides in the cytoplasm. It is found in the nucleus. The chain is Putative glutamine amidotransferase PB2B2.05 from Schizosaccharomyces pombe (strain 972 / ATCC 24843) (Fission yeast).